The following is a 309-amino-acid chain: Homoserine O-succinyltransferase (309 aa).

Cys-142 acts as the Acyl-thioester intermediate in catalysis. Residues Lys-163 and Ser-192 each coordinate substrate. His-235 functions as the Proton acceptor in the catalytic mechanism. Glu-237 is a catalytic residue. Arg-249 is a substrate binding site.

The protein belongs to the MetA family. In terms of assembly, homodimer.

It is found in the cytoplasm. It carries out the reaction L-homoserine + succinyl-CoA = O-succinyl-L-homoserine + CoA. It participates in amino-acid biosynthesis; L-methionine biosynthesis via de novo pathway; O-succinyl-L-homoserine from L-homoserine: step 1/1. In terms of biological role, transfers a succinyl group from succinyl-CoA to L-homoserine, forming succinyl-L-homoserine. The polypeptide is Homoserine O-succinyltransferase (Escherichia coli (strain K12 / MC4100 / BW2952)).